A 1252-amino-acid chain; its full sequence is MQKSQNVTAVTETNGVAAALGGHHTSPDTNAGKTKDAKEFGCSLGDLRGLMEARGAEAIVRLSTEHEGVEGLCKKLKTDSLVGLNGEQADLDRRRHVYGANTIPPAKSKGFVRLVLDACKDPTLVILVLSGFINLALSFYEPTSAAEDATQHLVNATTAAILANGTFMSTTEAPSEGHGTAWIEGVAILLCVIVVVLVTAVNDYSKERQFRSLQEKIETGQKFSVIRNGEAIDVPVSDLVVGDIARVKYGDLLPADGFLIQSNDLKIDESSLTGESDHIKKSIESDPVLLSGTYAMEGSGKMLITAVGVNSQTGIIMTLLGAGKAGIGDDDSTSTSSSSSSSSSSSGSSSNGSSDSSKSGDDDLTAKSVLQAKLSKLALQIIYCGTTIAIIALIVLVTRFCLDHYVFEKNEFSLVDIQMFVKFFIIAVTILVISIPEGLPLAIALALTYSVRKMMHDNNLVRHLDACETMGNATSICSDKTGTLTTNRMTVVQSYINGNHYTSQEAQPHGANLPGSTGPILMEAISVNCAYNSMIVEPTKAGEQIQQLGNKTECGLLGFVNRLGGDYAAIRKKFPEHDLTKVYTFNSSRKCMMTVVPYAENGQNIGYRVYCKGASEIVLGRCTYLIGSDGKPHQLTGDRLKEITSTIIHEMANSGLRTICVAYKTIIKKGTRDVEKTEIEFAEDSDIDWDDEDAMYQNFTGIAICGIQDPVRPEVPVAISKCKKAGITVRMVTGDNIMTARAIAMSCKILEPGEDFLALEGKEFNERIRDENGKVSQAKLDEIWPRLRVLARAQPADKYTLVKGIIDSKATPQREIVAVTGDGTNDGPALKKADVGFAMGIAGTDVAKEASDIILTDDNFTSIVKAVMWGRNVYDSISKFLQFQLTVNVVAVITAFVGAVTVSDSPLKAVHMLWINLIMDTLASLALATEQPTDELLERKPYGRKKSLISRTMVKNILCHALYQLIIIFVIFFYGDTIFGIKTGLYAPLFAPPSQHFTLVFNAFVMMTVFNEINARKVHGERNVFKGLASNRVFCVIWVTTFIAQIIIVQFGGAWFSTAPLTLQQWIVCLVLGFSTLIWGQIVATIPSKKLPKAWKVGKGEVQPANLHINGDYNVRARSRAVTLRRSGKSLWVRGMFIIGNHLRVLRAFGMEKSEKAAFGRTAPAMTAEAAERWRASYRKYRHQKHQEKKATAETAESVKSADWAKEQKEKKKTFKQIKQVARGKSLDKDSKKHHKKRKDQTNVDMEDIELN.

Residues Met1 to Asp121 are Cytoplasmic-facing. A helical transmembrane segment spans residues Pro122–Pro142. Topologically, residues Thr143–Thr180 are extracellular. N-linked (GlcNAc...) asparagine glycosylation is found at Asn155 and Asn164. The chain crosses the membrane as a helical span at residues Ala181–Val201. Residues Asn202–Lys376 lie on the Cytoplasmic side of the membrane. A disordered region spans residues Asp330–Asp361. Residues Thr333–Ser357 are compositionally biased toward low complexity. Residues Leu377–Val397 traverse the membrane as a helical segment. Residues Thr398–Lys422 lie on the Extracellular side of the membrane. A helical transmembrane segment spans residues Phe423–Ile443. Residues Val432, Ile435, and Glu437 each contribute to the Ca(2+) site. Residues Ala444–Lys879 lie on the Cytoplasmic side of the membrane. Residue Asp479 is the 4-aspartylphosphate intermediate of the active site. Mg(2+)-binding residues include Asp479 and Thr481. Residues Thr481, Glu553, Lys612, Thr733, Gly734, Asp735, Arg792, and Lys798 each contribute to the ATP site. A Mg(2+)-binding site is contributed by Asp822. Asn825 serves as a coordination point for ATP. The helical transmembrane segment at Phe880 to Val900 threads the bilayer. A Ca(2+)-binding site is contributed by Asn888. Topologically, residues Thr901–Lys908 are extracellular. The chain crosses the membrane as a helical span at residues Ala909–Thr929. Ca(2+) is bound by residues Asn916 and Asp920. At Glu930–His960 the chain is on the cytoplasmic side. A helical transmembrane segment spans residues Ala961 to Ile981. Residues Lys982–Leu989 lie on the Extracellular side of the membrane. The helical transmembrane segment at Phe990–Phe1010 threads the bilayer. Residues Asn1011–Cys1035 lie on the Cytoplasmic side of the membrane. A helical membrane pass occupies residues Val1036 to Phe1056. Residues Ser1057–Gln1065 are Extracellular-facing. Residues Trp1066–Ile1086 traverse the membrane as a helical segment. The Cytoplasmic portion of the chain corresponds to Pro1087–Asn1252. Positions Leu1124–His1142 are calmodulin-binding subdomain A. Positions Leu1143 to Glu1152 are calmodulin-binding subdomain B. The tract at residues Tyr1181–Asn1252 is disordered.

The protein belongs to the cation transport ATPase (P-type) (TC 3.A.3) family. Type IIB subfamily. Interacts with calmodulin.

It localises to the cell membrane. It carries out the reaction Ca(2+)(in) + ATP + H2O = Ca(2+)(out) + ADP + phosphate + H(+). Its function is as follows. Catalyzes the hydrolysis of ATP coupled with the transport of calcium across a membrane. The protein is Plasma membrane calcium-transporting ATPase mca-1 of Caenorhabditis elegans.